Consider the following 194-residue polypeptide: Peptidyl-tRNA hydrolase (194 aa).

Residue Tyr16 coordinates tRNA. His21 (proton acceptor) is an active-site residue. 3 residues coordinate tRNA: Phe67, Asn69, and Asn115.

Belongs to the PTH family. In terms of assembly, monomer.

It localises to the cytoplasm. It carries out the reaction an N-acyl-L-alpha-aminoacyl-tRNA + H2O = an N-acyl-L-amino acid + a tRNA + H(+). Hydrolyzes ribosome-free peptidyl-tRNAs (with 1 or more amino acids incorporated), which drop off the ribosome during protein synthesis, or as a result of ribosome stalling. Functionally, catalyzes the release of premature peptidyl moieties from peptidyl-tRNA molecules trapped in stalled 50S ribosomal subunits, and thus maintains levels of free tRNAs and 50S ribosomes. In Salmonella agona (strain SL483), this protein is Peptidyl-tRNA hydrolase.